A 385-amino-acid polypeptide reads, in one-letter code: Chorismate synthase (385 aa).

Positions 40 and 46 each coordinate NADP(+). FMN is bound by residues 128-130 (RAS), 248-249 (QA), G293, 308-312 (KAIPS), and R334.

This sequence belongs to the chorismate synthase family. As to quaternary structure, homotetramer. The cofactor is FMNH2.

It catalyses the reaction 5-O-(1-carboxyvinyl)-3-phosphoshikimate = chorismate + phosphate. It functions in the pathway metabolic intermediate biosynthesis; chorismate biosynthesis; chorismate from D-erythrose 4-phosphate and phosphoenolpyruvate: step 7/7. Its function is as follows. Catalyzes the anti-1,4-elimination of the C-3 phosphate and the C-6 proR hydrogen from 5-enolpyruvylshikimate-3-phosphate (EPSP) to yield chorismate, which is the branch point compound that serves as the starting substrate for the three terminal pathways of aromatic amino acid biosynthesis. This reaction introduces a second double bond into the aromatic ring system. In Endomicrobium trichonymphae, this protein is Chorismate synthase.